Here is a 316-residue protein sequence, read N- to C-terminus: Methionyl-tRNA formyltransferase (316 aa).

114 to 117 (SLLP) contacts (6S)-5,6,7,8-tetrahydrofolate.

This sequence belongs to the Fmt family.

It carries out the reaction L-methionyl-tRNA(fMet) + (6R)-10-formyltetrahydrofolate = N-formyl-L-methionyl-tRNA(fMet) + (6S)-5,6,7,8-tetrahydrofolate + H(+). Functionally, attaches a formyl group to the free amino group of methionyl-tRNA(fMet). The formyl group appears to play a dual role in the initiator identity of N-formylmethionyl-tRNA by promoting its recognition by IF2 and preventing the misappropriation of this tRNA by the elongation apparatus. This chain is Methionyl-tRNA formyltransferase, found in Aromatoleum aromaticum (strain DSM 19018 / LMG 30748 / EbN1) (Azoarcus sp. (strain EbN1)).